The chain runs to 67 residues: Putative selenoprotein YdfZ (67 aa).

At cysteine 52 the chain carries S-selanylcysteine.

The chain is Putative selenoprotein YdfZ (ydfZ) from Escherichia coli O6:H1 (strain CFT073 / ATCC 700928 / UPEC).